The chain runs to 564 residues: E3 ubiquitin-protein ligase TRIM16 (564 aa).

The disordered stretch occupies residues 1–70 (MAELDLMAPG…DPAEQGDPAG (70 aa)). The span at 24-39 (SPDSGSPSPDSGSASP) shows a compositional bias: low complexity. 2 B box-type zinc fingers span residues 72–122 (GKEV…LTEP) and 126–165 (HNWR…IVSL). Residue Ser-116 is modified to Phosphoserine. Cys-131, His-134, Cys-153, and His-157 together coordinate Zn(2+). Coiled coils occupy residues 165–203 (LDAA…NQKS), 243–274 (AALS…RMAA), and 320–340 (HLIQ…KEEE). The residue at position 203 (Ser-203) is a Phosphoserine. The region spanning 355–553 (YWTSKPEPST…RIVDLGEEPE (199 aa)) is the B30.2/SPRY domain.

Belongs to the TRIM/RBCC family. In terms of assembly, homodimerizes via its coiled-coil domain. Heterodimerizes with MID1, TRIM24 and PML. Interacts with Galectin-3/LGALS3 in a ULK1-dependent manner; this interaction mediates autophagy of damage endomembranes. Interacts with BECN1. Interacts with ATG16L1. Interacts with p62/SQSTM and LC3B/MAP1LC3B. Post-translationally, phosphorylated by ULK1. In terms of processing, auto-ubiquitinates via its B-Boxes.

It localises to the cytoplasm. It catalyses the reaction S-ubiquitinyl-[E2 ubiquitin-conjugating enzyme]-L-cysteine + [acceptor protein]-L-lysine = [E2 ubiquitin-conjugating enzyme]-L-cysteine + N(6)-ubiquitinyl-[acceptor protein]-L-lysine.. In terms of biological role, E3 ubiquitin ligase that plays an essential role in the organization of autophagic response and ubiquitination upon lysosomal and phagosomal damages. Plays a role in the stress-induced biogenesis and degradation of protein aggresomes by regulating the p62-KEAP1-NRF2 signaling and particularly by modulating the ubiquitination levels and thus stability of NRF2. Acts as a scaffold protein and facilitates autophagic degradation of protein aggregates by interacting with p62/SQSTM, ATG16L1 and LC3B/MAP1LC3B. In turn, protects the cell against oxidative stress-induced cell death as a consequence of endomembrane damage. The polypeptide is E3 ubiquitin-protein ligase TRIM16 (TRIM16) (Pongo abelii (Sumatran orangutan)).